A 588-amino-acid chain; its full sequence is Adenine deaminase (588 aa).

This sequence belongs to the metallo-dependent hydrolases superfamily. Adenine deaminase family. As to quaternary structure, homodimer. Mn(2+) is required as a cofactor.

It catalyses the reaction adenine + H2O + H(+) = hypoxanthine + NH4(+). This chain is Adenine deaminase, found in Escherichia coli (strain K12 / DH10B).